Reading from the N-terminus, the 776-residue chain is Cilium assembly protein DZIP1L (776 aa).

A C2H2-type zinc finger spans residues 166–189 (HTCHLCDKTFMNATFLRGHIQRRH). Positions 196-450 (GKQKQEQQLG…RKVLAALRNN (255 aa)) form a coiled coil. A phosphoserine mark is found at serine 425 and serine 426. The disordered stretch occupies residues 520 to 776 (SRAKKRWEGT…SGSRPRIPGW (257 aa)). A compositionally biased stretch (low complexity) spans 600–618 (GPSSTPVSPGPGLSTPPFS). Over residues 652–683 (WSDSETSEESAQSPGKGSDGLASSATLVQSMV) the composition is skewed to polar residues. The span at 685 to 694 (NLEKQLETPA) shows a compositional bias: basic and acidic residues. The segment covering 709–721 (TALQRSSTPARKT) has biased composition (polar residues).

The protein belongs to the DZIP C2H2-type zinc-finger protein family. As to quaternary structure, interacts with SEPTIN2.

It is found in the cytoplasm. It localises to the cytoskeleton. Its subcellular location is the cilium basal body. The protein resides in the microtubule organizing center. The protein localises to the centrosome. It is found in the centriole. Its function is as follows. Involved in primary cilium formation. Probably acts as a transition zone protein required for localization of PKD1/PC1 and PKD2/PC2 to the ciliary membrane. The sequence is that of Cilium assembly protein DZIP1L from Rattus norvegicus (Rat).